Consider the following 248-residue polypeptide: Isoprenyl transferase (248 aa).

Aspartate 23 is an active-site residue. Aspartate 23 is a binding site for Mg(2+). Residues 24–27 (GNGR), tryptophan 28, arginine 36, histidine 40, and 68–70 (STE) each bind substrate. Asparagine 71 acts as the Proton acceptor in catalysis. Substrate is bound by residues tryptophan 72, arginine 74, arginine 185, and 191-193 (RIS). Glutamate 204 is a Mg(2+) binding site.

The protein belongs to the UPP synthase family. Homodimer. Mg(2+) serves as cofactor.

In terms of biological role, catalyzes the condensation of isopentenyl diphosphate (IPP) with allylic pyrophosphates generating different type of terpenoids. The polypeptide is Isoprenyl transferase (Neisseria meningitidis serogroup A / serotype 4A (strain DSM 15465 / Z2491)).